The chain runs to 375 residues: Carbamoyl phosphate synthase small chain (375 aa).

Positions 1–184 (MVSLYLENGL…LDYKPFDEKI (184 aa)) are CPSase. Serine 44, glycine 240, and glycine 242 together coordinate L-glutamine. The Glutamine amidotransferase type-1 domain occupies 188-375 (IIAVLDFGAK…KEFVGLLEGF (188 aa)). The Nucleophile role is filled by cysteine 268. L-glutamine is bound by residues leucine 269, glutamine 272, asparagine 310, and tyrosine 313. Active-site residues include histidine 351 and glutamate 353.

It belongs to the CarA family. In terms of assembly, composed of two chains; the small (or glutamine) chain promotes the hydrolysis of glutamine to ammonia, which is used by the large (or ammonia) chain to synthesize carbamoyl phosphate. Tetramer of heterodimers (alpha,beta)4.

It carries out the reaction hydrogencarbonate + L-glutamine + 2 ATP + H2O = carbamoyl phosphate + L-glutamate + 2 ADP + phosphate + 2 H(+). It catalyses the reaction L-glutamine + H2O = L-glutamate + NH4(+). Its pathway is amino-acid biosynthesis; L-arginine biosynthesis; carbamoyl phosphate from bicarbonate: step 1/1. The protein operates within pyrimidine metabolism; UMP biosynthesis via de novo pathway; (S)-dihydroorotate from bicarbonate: step 1/3. In terms of biological role, small subunit of the glutamine-dependent carbamoyl phosphate synthetase (CPSase). CPSase catalyzes the formation of carbamoyl phosphate from the ammonia moiety of glutamine, carbonate, and phosphate donated by ATP, constituting the first step of 2 biosynthetic pathways, one leading to arginine and/or urea and the other to pyrimidine nucleotides. The small subunit (glutamine amidotransferase) binds and cleaves glutamine to supply the large subunit with the substrate ammonia. The protein is Carbamoyl phosphate synthase small chain of Helicobacter pylori (strain J99 / ATCC 700824) (Campylobacter pylori J99).